The primary structure comprises 489 residues: Monocarboxylate transporter 2 (489 aa).

Over 1–21 (MPSESSVKATAAPPPFPLPPD) the chain is Cytoplasmic. Residues 22–42 (GGWGWVVVCASFISIGFSYAF) traverse the membrane as a helical segment. Residues 43 to 65 (PKAVTVFFNDIKDIFKTTSSQIA) are Extracellular-facing. The helical transmembrane segment at 66-86 (WISSIMLAVMYAGGPISSVLV) threads the bilayer. Topologically, residues 87–95 (NNYGSRPVV) are cytoplasmic. A helical membrane pass occupies residues 96–116 (IVGGLLCCTGMILASFSSSVI). Residues 117-121 (ELYLT) lie on the Extracellular side of the membrane. The chain crosses the membrane as a helical span at residues 122–142 (VGFIGGLGLAFNLQPALTIIG). Over 143–154 (KYFYRKRPLANG) the chain is Cytoplasmic. The chain crosses the membrane as a helical span at residues 155–175 (FAMAGSPVFLSTLAPFNQFLF). Topologically, residues 176 to 179 (NSYG) are extracellular. Residues 180 to 200 (WKGSFLILGAIFLHSCVAGCL) traverse the membrane as a helical segment. Topologically, residues 201 to 250 (MRPVGPSPRAAKSKSKVGSRQDSSTKRLSKVSTAEKINRFLDFGLFTHRG) are cytoplasmic. A disordered region spans residues 206-227 (PSPRAAKSKSKVGSRQDSSTKR). A helical transmembrane segment spans residues 251-271 (FLIYLSGNVVLFLGMFAPIIF). Residues 272–286 (LAPYAKDKGVDDYNS) are Extracellular-facing. Residues 287–307 (AFLLSVMAFTDMFARPSVGLI) form a helical membrane-spanning segment. Topologically, residues 308–316 (ANTSLIRPR) are cytoplasmic. Residues 317–337 (IQYLFSVAIMFTGICHLLCPL) form a helical membrane-spanning segment. Topologically, residues 338–342 (AHSYT) are extracellular. Residues 343–363 (ALVVYVIFFGIGFGSISSLLF) form a helical membrane-spanning segment. Over 364 to 377 (ECLMDQVGASRFSS) the chain is Cytoplasmic. The helical transmembrane segment at 378–398 (AVGLVTIVECCPVLFGPPLAG) threads the bilayer. Residues 399-410 (KLLDITGQYKYL) lie on the Extracellular side of the membrane. A helical membrane pass occupies residues 411–431 (YIASGIVVLSSGIYLLICNAI). Residues 432-489 (NYRLLEKERKREKARRKKSASQASKEMEALSRSKQDDVTVKVSNTHNPPSDRDKESSI) are Cytoplasmic-facing. Positions 441–489 (KREKARRKKSASQASKEMEALSRSKQDDVTVKVSNTHNPPSDRDKESSI) are disordered. Basic and acidic residues-rich tracts occupy residues 456 to 470 (KEMEALSRSKQDDVT) and 480 to 489 (PSDRDKESSI).

Belongs to the major facilitator superfamily. Monocarboxylate porter (TC 2.A.1.13) family. In terms of assembly, homodimer. Interacts with GRID2IP. Interacts with EMB; interaction mediates SLC16A7 targeting to the plasma membrane. Interacts with isoform 2 of BSG. In terms of tissue distribution, detected in brain and kidney (at protein level).

It is found in the cell membrane. The protein resides in the basolateral cell membrane. The protein localises to the cytoplasm. The catalysed reaction is 3-methyl-2-oxobutanoate(out) + H(+)(out) = 3-methyl-2-oxobutanoate(in) + H(+)(in). The enzyme catalyses (S)-lactate(in) + H(+)(in) = (S)-lactate(out) + H(+)(out). It catalyses the reaction acetoacetate(out) + H(+)(out) = acetoacetate(in) + H(+)(in). It carries out the reaction (R)-3-hydroxybutanoate(out) + H(+)(out) = (R)-3-hydroxybutanoate(in) + H(+)(in). The catalysed reaction is 4-methyl-2-oxopentanoate(out) + H(+)(out) = 4-methyl-2-oxopentanoate(in) + H(+)(in). The enzyme catalyses pyruvate(out) + H(+)(out) = pyruvate(in) + H(+)(in). It catalyses the reaction (S)-3-hydroxybutanoate(out) + H(+)(out) = (S)-3-hydroxybutanoate(in) + H(+)(in). Its activity is regulated as follows. Transport activity exhibits steep dependence on substrate concentration. Substrate concentration sensitivity of SLC16A7 arises from the strong inter-subunit cooperativity of the SLC16A7 dimer during transport. Inhibited by AR-C155858. In terms of biological role, proton-coupled monocarboxylate symporter. Catalyzes the rapid transport across the plasma membrane of monocarboxylates such as L-lactate, pyruvate and ketone bodies, acetoacetate, beta-hydroxybutyrate and acetate. Dimerization is functionally required and both subunits work cooperatively in transporting substrate. The polypeptide is Monocarboxylate transporter 2 (Slc16a7) (Rattus norvegicus (Rat)).